The chain runs to 57 residues: Potassium channel toxin alpha-KTx 4.2 (57 aa).

The first 20 residues, 1–20 (MKVLYGILIIFILCSMFYLS), serve as a signal peptide directing secretion. A propeptide spans 21 to 22 (QE) (removed by a carboxypeptidase). Disulfide bonds link Cys29–Cys50, Cys35–Cys55, and Cys39–Cys57.

The protein belongs to the short scorpion toxin superfamily. Potassium channel inhibitor family. Alpha-KTx 04 subfamily. Expressed by the venom gland.

The protein localises to the secreted. Blocker for small-conductance calcium-activated potassium channels KCa2.2/KCNN2 (Kd=80 nM) and KCa2.3/KCNN3 (Kd=197 nM) and ERG1/Kv11.1/KCNH2 potassium channels (53% inhibition at 5 uM). Has also been shown to inhibit Kv1.1/KCNA1 and Nav1.7/SCN9A with a moderate potency, as well as Kv11.1/KCNH2/ERG1 and Kv1.2/KCNA2 with a low potency. The polypeptide is Potassium channel toxin alpha-KTx 4.2 (Tityus serrulatus (Brazilian scorpion)).